We begin with the raw amino-acid sequence, 198 residues long: (S)-2-hydroxypropylphosphonic acid epoxidase (198 aa).

Positions 15–70 constitute an HTH cro/C1-type domain; the sequence is LKDRREQVKMDHAALASLLGETPETVAAWENGEGGELTLTQLGRIAHVLGTSIGAL. Lys23 contributes to the substrate binding site. The segment at residues 26–45 is a DNA-binding region (H-T-H motif); it reads HAALASLLGETPETVAAWEN. Residues Arg97, Tyr105, 135 to 138, and Glu142 each bind substrate; that span reads NSGH. Residues 136–196 form the Cupin type-2 domain; sequence SGHAGNEFLF…GTGSAKLIAV (61 aa). The Fe cation site is built by His138, Glu142, and His180.

The protein belongs to the non-heme iron-dependent dioxygenase family. Homotetramer. Fe(2+) serves as cofactor.

It catalyses the reaction (S)-2-hydroxypropylphosphonate + H2O2 = (1R,2S)-epoxypropylphosphonate + 2 H2O. Its pathway is antibiotic biosynthesis; fosfomycin biosynthesis. Non-heme-dependent dioxygenase that catalyzes the oxidative epoxidation of (S)-2-hydroxypropylphosphonate into (1R,2S)-epoxypropylphosphonate, the final step in the biosynthesis of fosfomycin antibiotic. The chain is (S)-2-hydroxypropylphosphonic acid epoxidase (hppE) from Streptomyces wedmorensis.